Reading from the N-terminus, the 477-residue chain is Aspartyl/glutamyl-tRNA(Asn/Gln) amidotransferase subunit B (477 aa).

It belongs to the GatB/GatE family. GatB subfamily. As to quaternary structure, heterotrimer of A, B and C subunits.

It carries out the reaction L-glutamyl-tRNA(Gln) + L-glutamine + ATP + H2O = L-glutaminyl-tRNA(Gln) + L-glutamate + ADP + phosphate + H(+). The catalysed reaction is L-aspartyl-tRNA(Asn) + L-glutamine + ATP + H2O = L-asparaginyl-tRNA(Asn) + L-glutamate + ADP + phosphate + 2 H(+). Its function is as follows. Allows the formation of correctly charged Asn-tRNA(Asn) or Gln-tRNA(Gln) through the transamidation of misacylated Asp-tRNA(Asn) or Glu-tRNA(Gln) in organisms which lack either or both of asparaginyl-tRNA or glutaminyl-tRNA synthetases. The reaction takes place in the presence of glutamine and ATP through an activated phospho-Asp-tRNA(Asn) or phospho-Glu-tRNA(Gln). The protein is Aspartyl/glutamyl-tRNA(Asn/Gln) amidotransferase subunit B of Nitrosococcus oceani (strain ATCC 19707 / BCRC 17464 / JCM 30415 / NCIMB 11848 / C-107).